The primary structure comprises 321 residues: Polyprenyl transferase cle5 (321 aa).

The next 9 membrane-spanning stretches (helical) occupy residues 26–46 (PLLATFSGVWATILAGSHKIT), 57–77 (VLSQALLCFICSFVFCGAGMV), 107–127 (EALVWMAFQFISSWVLVSWML), 132–149 (VQAAMLPVTLSTILYPFA), 159–179 (IYPQYLLGFTLAYPSLIGTLA), 189–209 (LWASINQSLPMFVTVFTWTLY), 232–252 (VLAGSYIHHLLVVLAVLVLGA), 262–282 (SQWLWGGWMGVWTWSFLGQLV), and 300–320 (FALGVWTVFVCVVELLIGGNG).

Belongs to the UbiA prenyltransferase family. The cofactor is Mg(2+).

The protein localises to the membrane. The protein operates within secondary metabolite biosynthesis; terpenoid biosynthesis. Functionally, polyprenyl transferase; part of the cluster A that mediates the biosynthesis of chevalone E and its oxidized derivatives that possess a unique five-membered lactone ring and can synergistically enhance the cytotoxicity of doxorubicin (DOX) in breast cancer cells. Within the pathway, cle5 takes part to the biosynthesis of the molecular scaffold by catalyzing the C-3 geranylgeranylation reaction of triacetic acid lactone (TAL) produced by cle1. The molecular scaffold is commonly biosynthesized by a series of enzymes including the non-reducing polyketide synthase (NR-PKS) cle1 that produces the alpha-pyrone triacetic acid lactone (TAL); The membrane-bound prenyltransferase cle5 that accepts TAL as its substrate to perform a C-3 geranylgeranylation reaction, in which the pathway-dedicated GGPS cle6 is required to provide GGPP, the other substrate of cle5; the FAD-dependent monooxygenase Cle3 that forms an (S)-epoxide ring at the terminal olefin of the geranylgeranyl group; and the terpene cyclase Cle7 that catalyzes the cyclization of the prenyl group that yields the pentacyclic pathway intermediate chevalone E. Chevalone E can derivatize into seven new oxidized analogs by the cytochrome P450 monooxygenases cle2 (acting at C-20) and cle4 (acting at C-11 and C-12). In Aspergillus versicolor, this protein is Polyprenyl transferase cle5.